A 203-amino-acid chain; its full sequence is NADH-quinone oxidoreductase subunit C (203 aa).

The protein belongs to the complex I 30 kDa subunit family. In terms of assembly, NDH-1 is composed of 14 different subunits. Subunits NuoB, C, D, E, F, and G constitute the peripheral sector of the complex.

Its subcellular location is the cell inner membrane. The enzyme catalyses a quinone + NADH + 5 H(+)(in) = a quinol + NAD(+) + 4 H(+)(out). Functionally, NDH-1 shuttles electrons from NADH, via FMN and iron-sulfur (Fe-S) centers, to quinones in the respiratory chain. The immediate electron acceptor for the enzyme in this species is believed to be ubiquinone. Couples the redox reaction to proton translocation (for every two electrons transferred, four hydrogen ions are translocated across the cytoplasmic membrane), and thus conserves the redox energy in a proton gradient. This is NADH-quinone oxidoreductase subunit C from Polaromonas sp. (strain JS666 / ATCC BAA-500).